We begin with the raw amino-acid sequence, 602 residues long: Elongation factor 4 (602 aa).

The 183-residue stretch at 7-189 folds into the tr-type G domain; it reads RNIRNFSIIA…AIVQRIPAPQ (183 aa). GTP is bound by residues 19 to 24 and 136 to 139; these read DHGKST and NKID.

This sequence belongs to the TRAFAC class translation factor GTPase superfamily. Classic translation factor GTPase family. LepA subfamily.

It localises to the cell inner membrane. The catalysed reaction is GTP + H2O = GDP + phosphate + H(+). Its function is as follows. Required for accurate and efficient protein synthesis under certain stress conditions. May act as a fidelity factor of the translation reaction, by catalyzing a one-codon backward translocation of tRNAs on improperly translocated ribosomes. Back-translocation proceeds from a post-translocation (POST) complex to a pre-translocation (PRE) complex, thus giving elongation factor G a second chance to translocate the tRNAs correctly. Binds to ribosomes in a GTP-dependent manner. The chain is Elongation factor 4 from Xylella fastidiosa (strain M12).